The primary structure comprises 662 residues: Serine/threonine kinase-like domain-containing protein STKLD1 (662 aa).

The Protein kinase domain occupies 1–202 (MLNPGALGVN…ILDMATCSFL (202 aa)). Residues 2–10 (LNPGALGVN) and lysine 25 each bind ATP. Positions 639–662 (LQEDQLEPPAGQEAPLQGEPLFRP) are disordered.

Belongs to the protein kinase superfamily. Ser/Thr protein kinase family. STKL subfamily.

The chain is Serine/threonine kinase-like domain-containing protein STKLD1 (Stkld1) from Mus musculus (Mouse).